Reading from the N-terminus, the 331-residue chain is Aromatic 2-oxoacid reductase (331 aa).

Residues 154-155 (RI), aspartate 175, 205-206 (AP), asparagine 211, 232-234 (AAR), and aspartate 258 each bind NAD(+). Arginine 234 is an active-site residue. The active site involves glutamate 263. Catalysis depends on histidine 295, which acts as the Proton donor.

It belongs to the D-isomer specific 2-hydroxyacid dehydrogenase family.

The catalysed reaction is (R)-3-phenyllactate + NAD(+) = 3-phenylpyruvate + NADH + H(+). The enzyme catalyses (2R)-2-hydroxy-3-(4-hydroxyphenyl)propanoate + NAD(+) = 3-(4-hydroxyphenyl)pyruvate + NADH + H(+). It carries out the reaction 3-(indol-3-yl)lactate + NAD(+) = indole-3-pyruvate + NADH + H(+). Its pathway is amino-acid degradation. Its function is as follows. Essential for the reductive metabolism of L-phenylalanine, L-tyrosine and L-tryptophan. Catalyzes the conversion of phenylpyruvic acid to phenyllactic acid, 4-hydroxy-phenylpyruvic acid to 4-hydroxy-phenyllactic acid, and indolepyruvic acid to indolelactic acid. This Clostridium sporogenes (strain ATCC 7955 / DSM 767 / NBRC 16411 / NCIMB 8053 / NCTC 8594 / PA 3679) protein is Aromatic 2-oxoacid reductase.